The chain runs to 319 residues: Ferrochelatase (319 aa).

His193 and Glu274 together coordinate Fe cation.

It belongs to the ferrochelatase family.

It localises to the cytoplasm. It catalyses the reaction heme b + 2 H(+) = protoporphyrin IX + Fe(2+). It functions in the pathway porphyrin-containing compound metabolism; protoheme biosynthesis; protoheme from protoporphyrin-IX: step 1/1. Its function is as follows. Catalyzes the ferrous insertion into protoporphyrin IX. This chain is Ferrochelatase, found in Erwinia tasmaniensis (strain DSM 17950 / CFBP 7177 / CIP 109463 / NCPPB 4357 / Et1/99).